We begin with the raw amino-acid sequence, 1258 residues long: Serine/threonine-protein kinase Nek1 (1258 aa).

Residues Tyr-4 to Ile-258 enclose the Protein kinase domain. ATP-binding positions include Ile-10–Ala-18 and Lys-33. The Proton acceptor role is filled by Asp-128. Thr-156 bears the Phosphothreonine mark. Position 162 is a phosphothreonine; by autocatalysis (Thr-162). The disordered stretch occupies residues His-330–Glu-360. Residues Thr-344–Glu-360 are compositionally biased toward basic and acidic residues. Phosphoserine is present on residues Ser-414, Ser-418, Ser-428, and Ser-438. 3 disordered regions span residues Lys-578–Met-600, Lys-648–Gln-669, and Val-685–Asn-704. Over residues Leu-579–Gly-591 the composition is skewed to basic and acidic residues. Residue Ser-653 is modified to Phosphoserine. A Phosphothreonine modification is found at Thr-661. Ser-664 bears the Phosphoserine mark. A compositionally biased stretch (basic and acidic residues) spans Asp-691–Gln-700. A phosphoserine mark is found at Ser-798, Ser-834, Ser-868, Ser-881, Ser-1052, and Ser-1126. The tract at residues Arg-1118 to Gly-1171 is disordered.

Belongs to the protein kinase superfamily. NEK Ser/Thr protein kinase family. NIMA subfamily. In terms of assembly, binds to CBY2. Found in a complex with CFAP410, NEK1 and SPATA7. Interacts with CFAP410. Interacts (via Ser-1052 phosphorylated form) with 14-3-3 proteins. Requires Mg(2+) as cofactor. As to expression, high fetal expression in the brain and kidney.

It localises to the nucleus. Its subcellular location is the cytoplasm. The protein resides in the cytoskeleton. It is found in the microtubule organizing center. The protein localises to the centrosome. The enzyme catalyses L-seryl-[protein] + ATP = O-phospho-L-seryl-[protein] + ADP + H(+). It carries out the reaction L-threonyl-[protein] + ATP = O-phospho-L-threonyl-[protein] + ADP + H(+). Functionally, phosphorylates serines and threonines, but also appears to possess tyrosine kinase activity. Involved in DNA damage checkpoint control and for proper DNA damage repair. In response to injury that includes DNA damage, NEK1 phosphorylates VDAC1 to limit mitochondrial cell death. May be implicated in the control of meiosis. Involved in cilium assembly. This is Serine/threonine-protein kinase Nek1 (NEK1) from Homo sapiens (Human).